The following is a 774-amino-acid chain: MERRGSSCLCRCLALLALLPTLSLAQYESWRHYPEYFQEPAPEYHRPEVPSDVAKIQLRLAGQKRKHSEGRVEVYYDGQWGTVCDDDFTIHAAHVVCRELGYVEAKSWTASSSYGKGEGPIWLDNVYCTGSEATLAACSSNGWGVTDCKHTEDVGVVCSEKRIPGFKFDNSLINSIENMNIQVEDIRIRAILSAFRKRTPVTEGYVEVKEGKTWKQICDKHWTAKNSRVVCGMFGFPGEKTYNTKVYKMFAARKKQRYWPYSMDCTGTEAHISSCKLGPQVSLDPVKNVTCENGLPAVVSCVPGQVFSPDGPSRFRKAYKPEQPLVRLRGGANVGEGRVEVLKNGEWGTVCDDKWDLVSASVVCRELGFGSAKEAITGSRLGQGIGPIHLNEIECTGNEKSIIDCKFNAESQGCNHEEDAAVRCNIPAMGFQKKLRLNGGRNPYEGRVEVLVERNGSLVWGMVCGENWGIVEAMVVCRQLGLGFASNAFQETWYWHGNINANKVVMSGVKCSGTELSLAHCRHDGEDVACPEGGVRYGAGVACSETAPDLVLNAEIVQQSTYLEDRPMFMLQCAMEENCLSASAAQTNPTTGYRRLLRFSSQIHNNGQSDFRPKNGRHAWIWHDCHRHYHSMEVFTHYDLLNLNGTKVAEGHKASFCLEDTECEGDIQKSYECANFGEQGITMGCWDMYRHDIDCQWVDITDVPPGDYLFQVVINPNYEVAESDYTNNIMKCRTRYDGHRIWMYNCHIGGSFSEETEKKFEHFSGLINNQVSKR.

The first 25 residues, 1 to 25 (MERRGSSCLCRCLALLALLPTLSLA), serve as a signal peptide directing secretion. 4 consecutive SRCR domains span residues 58–159 (LRLA…VVCS), 188–302 (IRAI…VSCV), 326–425 (VRLR…VRCN), and 435–544 (LRLN…VACS). 9 cysteine pairs are disulfide-bonded: cysteine 84–cysteine 148, cysteine 97–cysteine 158, cysteine 128–cysteine 138, cysteine 218–cysteine 291, cysteine 231–cysteine 301, cysteine 265–cysteine 275, cysteine 351–cysteine 414, cysteine 364–cysteine 424, and cysteine 395–cysteine 405. N-linked (GlcNAc...) asparagine glycosylation occurs at asparagine 288. N-linked (GlcNAc...) asparagine glycosylation occurs at asparagine 455. 3 disulfide bridges follow: cysteine 464–cysteine 530, cysteine 477–cysteine 543, and cysteine 511–cysteine 521. Residues 548–751 (PDLVLNAEIV…WMYNCHIGGS (204 aa)) form a lysyl-oxidase like region. 2 residues coordinate Ca(2+): aspartate 549 and leucine 550. 4 disulfides stabilise this stretch: cysteine 573–cysteine 625, cysteine 579–cysteine 695, cysteine 657–cysteine 673, and cysteine 663–cysteine 685. The Cu cation site is built by histidine 626, histidine 628, and histidine 630. Asparagine 644 is a glycosylation site (N-linked (GlcNAc...) asparagine). The segment at residues 653 to 689 (KASFCLEDTECEGDIQKSYECANFGEQGITMGCWDMY) is a cross-link (lysine tyrosylquinone (Lys-Tyr)). At tyrosine 689 the chain carries 2',4',5'-topaquinone. Residues glutamate 722, aspartate 724, asparagine 727, and asparagine 728 each contribute to the Ca(2+) site. The cysteines at positions 732 and 746 are disulfide-linked.

The protein belongs to the lysyl oxidase family. In terms of assembly, component of some chromatin repressor complex. Interacts with SNAI1. Interacts with TAF10. Interacts with HSPA5. Interacts with EFEMP2. Cu cation serves as cofactor. The cofactor is lysine tyrosylquinone residue. Post-translationally, the lysine tyrosylquinone cross-link (LTQ) is generated by condensation of the epsilon-amino group of a lysine with a topaquinone produced by oxidation of tyrosine. N-glycosylated. N-glycosylation on Asn-455 and Asn-644 may be essential for proper folding and secretion; may be composed of a fucosylated carbohydrates attached to a trimannose N-linked glycan core.

Its subcellular location is the secreted. It localises to the extracellular space. It is found in the extracellular matrix. The protein localises to the basement membrane. The protein resides in the nucleus. Its subcellular location is the chromosome. It localises to the endoplasmic reticulum. It catalyses the reaction L-lysyl-[protein] + O2 + H2O = (S)-2-amino-6-oxohexanoyl-[protein] + H2O2 + NH4(+). Specifically inhibited by a mouse monoclonal antibody AB0023, inhibition occurs in a non-competitive manner. In terms of biological role, mediates the post-translational oxidative deamination of lysine residues on target proteins leading to the formation of deaminated lysine (allysine). Acts as a transcription corepressor and specifically mediates deamination of trimethylated 'Lys-4' of histone H3 (H3K4me3), a specific tag for epigenetic transcriptional activation. Shows no activity against histone H3 when it is trimethylated on 'Lys-9' (H3K9me3) or 'Lys-27' (H3K27me3) or when 'Lys-4' is monomethylated (H3K4me1) or dimethylated (H3K4me2). Also mediates deamination of methylated TAF10, a member of the transcription factor IID (TFIID) complex, which induces release of TAF10 from promoters, leading to inhibition of TFIID-dependent transcription. LOXL2-mediated deamination of TAF10 results in transcriptional repression of genes required for embryonic stem cell pluripotency including POU5F1/OCT4, NANOG, KLF4 and SOX2. Involved in epithelial to mesenchymal transition (EMT) via interaction with SNAI1 and participates in repression of E-cadherin CDH1, probably by mediating deamination of histone H3. During EMT, involved with SNAI1 in negatively regulating pericentromeric heterochromatin transcription. SNAI1 recruits LOXL2 to pericentromeric regions to oxidize histone H3 and repress transcription which leads to release of heterochromatin component CBX5/HP1A, enabling chromatin reorganization and acquisition of mesenchymal traits. Interacts with the endoplasmic reticulum protein HSPA5 which activates the IRE1-XBP1 pathway of the unfolded protein response, leading to expression of several transcription factors involved in EMT and subsequent EMT induction. When secreted into the extracellular matrix, promotes cross-linking of extracellular matrix proteins by mediating oxidative deamination of peptidyl lysine residues in precursors to fibrous collagen and elastin. Acts as a regulator of sprouting angiogenesis, probably via collagen IV scaffolding. Acts as a regulator of chondrocyte differentiation, probably by regulating expression of factors that control chondrocyte differentiation. The sequence is that of Lysyl oxidase homolog 2 (LOXL2) from Bos taurus (Bovine).